We begin with the raw amino-acid sequence, 602 residues long: Toxin YwqJ (602 aa).

The LXG domain occupies 1–235 (MSKVFESKSL…TTYIDAKTQQ (235 aa)). Coiled coils occupy residues 6 to 41 (ESKS…VADL) and 227 to 251 (TYID…EANK).

In the N-terminal section; belongs to the LXG family. In terms of assembly, probably interacts with cognate immunity protein YwqK but not with non-cognate immunity proteins. The interaction inhibits the toxic activity of YwqJ.

The protein localises to the secreted. In terms of biological role, toxic component of one of 6 LXG toxin-immunity modules in this strain. They promote kin selection, mediate competition in biofilms, and drive spatial segregation of different strains, indicating that LXG toxins may help avoid warfare between strains in biofilms. Mediates intercellular competition during biofilm formation; disruption of the operon disadvantages the bacteria, but overexpression of the cognate immunity protein restores growth in competition with wild-type. Overexpression alone in situ causes growth arrest but not cell lysis; no effect is seen on DNA or rRNA. Co-overexpression with cognate immunity protein YwqK does not cause growth arrest. The toxic effect is dependent on the epsA and tapA operons which are required for biofilm formation. Its toxic effects are probably neutralized by its cognate immunity protein YwqK, but not by immunity proteins specific to other toxins with the LXG domain. May have deaminase activity. This chain is Toxin YwqJ (ywqJ), found in Bacillus subtilis (strain 168).